The primary structure comprises 472 residues: Dihydrolipoyl dehydrogenase 2 (472 aa).

FAD is bound by residues 39–47 (ERDAYGGTC), Lys56, and Ala118. Cysteines 47 and 52 form a disulfide. NAD(+) is bound by residues 186–190 (GAGYI), Glu209, and 275–278 (AVGR). Residues Asp318 and Ala326 each contribute to the FAD site. The active-site Proton acceptor is His450.

Belongs to the class-I pyridine nucleotide-disulfide oxidoreductase family. Homodimer. It depends on FAD as a cofactor.

The protein localises to the cytoplasm. It carries out the reaction N(6)-[(R)-dihydrolipoyl]-L-lysyl-[protein] + NAD(+) = N(6)-[(R)-lipoyl]-L-lysyl-[protein] + NADH + H(+). The chain is Dihydrolipoyl dehydrogenase 2 (lpdA2) from Haloarcula marismortui (strain ATCC 43049 / DSM 3752 / JCM 8966 / VKM B-1809) (Halobacterium marismortui).